Here is a 152-residue protein sequence, read N- to C-terminus: Ribosome maturation factor RimP (152 aa).

It belongs to the RimP family.

It localises to the cytoplasm. Its function is as follows. Required for maturation of 30S ribosomal subunits. The protein is Ribosome maturation factor RimP of Burkholderia orbicola (strain MC0-3).